Consider the following 211-residue polypeptide: MAQAQVFDARTGRRSEMELKGPRFETEPKQHVIHRAVVAELEARRRWTASTRERSEVAGSGAKLYRQKGTGRARAGDIKSPLRHGGGTWGGPKPKGPRYGKKINRKEARAAFDGALSAKAAEGRLYVLDALDFERPSTKRAKELLGQMGVEGPVLLVLDGEEREAALSFRNLPEVTVVGPRGYGVYELLRAREVVFSRAAYGRLTAGREEG.

Disordered stretches follow at residues 1–28 and 48–99; these read MAQA…ETEP and TAST…GPRY. Residues 10–28 show a composition bias toward basic and acidic residues; that stretch reads RTGRRSEMELKGPRFETEP.

This sequence belongs to the universal ribosomal protein uL4 family. Part of the 50S ribosomal subunit.

Functionally, one of the primary rRNA binding proteins, this protein initially binds near the 5'-end of the 23S rRNA. It is important during the early stages of 50S assembly. It makes multiple contacts with different domains of the 23S rRNA in the assembled 50S subunit and ribosome. Forms part of the polypeptide exit tunnel. The sequence is that of Large ribosomal subunit protein uL4 from Rubrobacter xylanophilus (strain DSM 9941 / JCM 11954 / NBRC 16129 / PRD-1).